The following is a 314-amino-acid chain: Olfactory receptor 14A2 (314 aa).

Over 1–26 (MANVTLVTGFLLMGFSNIQKLRILYG) the chain is Extracellular. N-linked (GlcNAc...) asparagine glycosylation is present at Asn-3. Residues 27-47 (VLFLLIYLAALMSNLLIITLI) form a helical membrane-spanning segment. Topologically, residues 48–55 (TLDVKLQT) are cytoplasmic. Residues 56 to 76 (PMYFFLKNLSFLDVFLVSVPI) form a helical membrane-spanning segment. Over 77 to 91 (PKFIVNNLTHNNSIS) the chain is Extracellular. The N-linked (GlcNAc...) asparagine glycan is linked to Asn-83. The chain crosses the membrane as a helical span at residues 92–112 (ILGCAFQLLLMTSFSAGEIFI). A disulfide bond links Cys-95 and Cys-177. Topologically, residues 113 to 136 (LTAMSYDRYVAICCPLNYEVIMNT) are cytoplasmic. A helical transmembrane segment spans residues 137–157 (GVCVLMASVSWAIGGLFGTAY). Residues 158-193 (TAGTFSMPFCGSSVIPQFFCDVPSLLRISCSETLMV) are Extracellular-facing. A helical transmembrane segment spans residues 194–214 (IYAGIGVGACLSISCFICIVI). Residues 215-237 (SYIYIFSTVLKIPTTKGQSKAFS) lie on the Cytoplasmic side of the membrane. A helical transmembrane segment spans residues 238–258 (TCFPHLTVFTVFIITAYFVYL). At 259–267 (KPPSNSPSV) the chain is on the extracellular side. The helical transmembrane segment at 268-290 (IDRLLSVIYTVMPPVFNPVTYSL) threads the bilayer. Topologically, residues 291 to 314 (RNNDMKCALIRLLQKTYGQEAYFI) are cytoplasmic.

Belongs to the G-protein coupled receptor 1 family.

The protein localises to the cell membrane. Odorant receptor. This is Olfactory receptor 14A2 (OR14A2) from Homo sapiens (Human).